We begin with the raw amino-acid sequence, 442 residues long: Putative ammonium transporter sll1017 (442 aa).

13 helical membrane-spanning segments follow: residues 5–25, 44–64, 81–101, 104–124, 133–153, 155–175, 193–213, 240–260, 269–289, 299–319, 325–345, 354–374, and 386–406; these read NFPLARYVLGAMLAFLFVGVA, LFLLAAAVLVLFMQAGFAMLE, TFDVCVGVLLYFLFGYSLMYG, PVLGGFFGWGGFGITNNLDNV, WLFQAAFAATAATIVSGAVMG, MYFKAYLIYSAVITGLVYPIS, FAGSLLVHSVGGFAALAAVVV, GVFILWVGWYGFNPGSQLAFV, MLIAVNTTLSAAAGGLAALAF, PNLLVTLNGILGGLVGITAGC, WSAIAIGVVAGILSVLGTKLL, VGAWPVHGLCGIWGGIAVGIF, and IVGSLVIPFWAFITMFFLFYV.

This sequence belongs to the ammonia transporter channel (TC 1.A.11.2) family.

It is found in the cell membrane. The protein is Putative ammonium transporter sll1017 of Synechocystis sp. (strain ATCC 27184 / PCC 6803 / Kazusa).